An 88-amino-acid polypeptide reads, in one-letter code: UPF0250 protein Shew_2940 (88 aa).

Belongs to the UPF0250 family.

The polypeptide is UPF0250 protein Shew_2940 (Shewanella loihica (strain ATCC BAA-1088 / PV-4)).